Consider the following 240-residue polypeptide: MRRKVLAGNWKMYKTRGEARAFLEAFVPLISPGAENREVILCGPFTCLDLLSAQAGPYAVGAQNVHWADHGAYTGEIAPQMLVELGVHYVIVGHSERREYFNETDSTVNRRLNNAQDHDLVPILCVGETESVRKDGITEAHIRSQLDRDLELVDMRRLIIAYEPIWAIGTGKTCEANEANRVCAMIRKHVNFEGVPILYGGSVKPENIDELMAQSDIDGVLVGGASLEAKSFARIVNFEV.

Residue 9 to 11 (NWK) coordinates substrate. Catalysis depends on His-94, which acts as the Electrophile. Glu-163 functions as the Proton acceptor in the catalytic mechanism. Substrate-binding positions include Gly-169, Ser-202, and 223–224 (GG).

It belongs to the triosephosphate isomerase family. Homodimer.

It is found in the cytoplasm. The catalysed reaction is D-glyceraldehyde 3-phosphate = dihydroxyacetone phosphate. Its pathway is carbohydrate biosynthesis; gluconeogenesis. The protein operates within carbohydrate degradation; glycolysis; D-glyceraldehyde 3-phosphate from glycerone phosphate: step 1/1. Involved in the gluconeogenesis. Catalyzes stereospecifically the conversion of dihydroxyacetone phosphate (DHAP) to D-glyceraldehyde-3-phosphate (G3P). The sequence is that of Triosephosphate isomerase from Gloeobacter violaceus (strain ATCC 29082 / PCC 7421).